We begin with the raw amino-acid sequence, 437 residues long: tRNA wybutosine-synthesizing protein 2 homolog (437 aa).

Residues Ser-208, Lys-215, Glu-255, and 283–284 contribute to the S-adenosyl-L-methionine site; that span reads DN. Positions 331–344 are enriched in polar residues; that stretch reads SFSGKNPQPPGSSN. Residues 331–374 form a disordered region; sequence SFSGKNPQPPGSSNMEKKHWPHPQKITTDKQGNRTTGSCMGEMS.

The protein belongs to the class I-like SAM-binding methyltransferase superfamily. TRM5/TYW2 family.

It carries out the reaction 4-demethylwyosine(37) in tRNA(Phe) + S-adenosyl-L-methionine = 4-demethyl-7-[(3S)-3-amino-3-carboxypropyl]wyosine(37) in tRNA(Phe) + S-methyl-5'-thioadenosine + H(+). It participates in tRNA modification; wybutosine-tRNA(Phe) biosynthesis. In terms of biological role, S-adenosyl-L-methionine-dependent transferase that acts as a component of the wybutosine biosynthesis pathway. Wybutosine is a hyper modified guanosine with a tricyclic base found at the 3'-position adjacent to the anticodon of eukaryotic phenylalanine tRNA. Catalyzes the transfer of the alpha-amino-alpha-carboxypropyl (acp) group from S-adenosyl-L-methionine to the C-7 position of 4-demethylwyosine (imG-14) to produce wybutosine-86. The chain is tRNA wybutosine-synthesizing protein 2 homolog (Trmt12) from Rattus norvegicus (Rat).